Consider the following 99-residue polypeptide: Cell division protein FtsB (99 aa).

The Cytoplasmic portion of the chain corresponds to 1 to 3 (MKF). The helical transmembrane segment at 4-21 (FVITLIVLLGLLQYRLWS) threads the bilayer. Residues 22 to 99 (GDNSLPEYFV…GDRAVSSPSQ (78 aa)) are Periplasmic-facing. A coiled-coil region spans residues 31–73 (VLQKQIAAQQDGNAKLNERNQVLKEEIIDLKSGTEAIEERARN).

The protein belongs to the FtsB family. In terms of assembly, part of a complex composed of FtsB, FtsL and FtsQ.

It localises to the cell inner membrane. In terms of biological role, essential cell division protein. May link together the upstream cell division proteins, which are predominantly cytoplasmic, with the downstream cell division proteins, which are predominantly periplasmic. This chain is Cell division protein FtsB, found in Shewanella oneidensis (strain ATCC 700550 / JCM 31522 / CIP 106686 / LMG 19005 / NCIMB 14063 / MR-1).